The sequence spans 154 residues: Iron-sulfur cluster assembly 2 homolog, mitochondrial (154 aa).

A mitochondrion-targeting transit peptide spans 1-8 (MAAAWGSS). The segment at 29 to 49 (SLGPQARREASSSSPEAGEGQ) is disordered. Low complexity predominate over residues 39-49 (SSSSPEAGEGQ). Fe cation-binding residues include Cys-79, Cys-144, and Cys-146.

Belongs to the HesB/IscA family. In terms of assembly, heterotetramer; forms a dimer of dimers with IBA57. Interacts with [2Fe-2S]-ISCA2 forming the heterodimer [2Fe- 2S]-ISCA2-IBA57 complex; [2Fe-2S] cluster binding is absolutely required to promote the complex formation.

Its subcellular location is the mitochondrion. Involved in the maturation of mitochondrial 4Fe-4S proteins functioning late in the iron-sulfur cluster assembly pathway. May be involved in the binding of an intermediate of Fe/S cluster assembly. This chain is Iron-sulfur cluster assembly 2 homolog, mitochondrial (ISCA2), found in Homo sapiens (Human).